The following is a 289-amino-acid chain: Nucleotide-binding protein MS1718 (289 aa).

Residue 8-15 (GRSGAGKS) participates in ATP binding. 56 to 59 (DIRN) is a GTP binding site.

It belongs to the RapZ-like family.

Its function is as follows. Displays ATPase and GTPase activities. In Mannheimia succiniciproducens (strain KCTC 0769BP / MBEL55E), this protein is Nucleotide-binding protein MS1718.